We begin with the raw amino-acid sequence, 394 residues long: Elongation factor Tu (394 aa).

Positions 10–204 constitute a tr-type G domain; sequence KPHVNVGTIG…ALDSYIPEPE (195 aa). The segment at 19–26 is G1; it reads GHVDHGKT. Residue 19-26 participates in GTP binding; sequence GHVDHGKT. Mg(2+) is bound at residue Thr26. The G2 stretch occupies residues 60 to 64; the sequence is GITIN. The interval 81 to 84 is G3; that stretch reads DCPG. Residues 81 to 85 and 136 to 139 each bind GTP; these read DCPGH and NKCD. A G4 region spans residues 136-139; that stretch reads NKCD. The G5 stretch occupies residues 174–176; sequence SAL.

It belongs to the TRAFAC class translation factor GTPase superfamily. Classic translation factor GTPase family. EF-Tu/EF-1A subfamily. Monomer.

Its subcellular location is the cytoplasm. The catalysed reaction is GTP + H2O = GDP + phosphate + H(+). In terms of biological role, GTP hydrolase that promotes the GTP-dependent binding of aminoacyl-tRNA to the A-site of ribosomes during protein biosynthesis. This chain is Elongation factor Tu, found in Shewanella amazonensis (strain ATCC BAA-1098 / SB2B).